Reading from the N-terminus, the 253-residue chain is Pimeloyl-[acyl-carrier protein] methyl ester esterase (253 aa).

Substrate contacts are provided by residues tryptophan 18, 78 to 79, and 139 to 143; these read SL and FLALD. Catalysis depends on serine 78, which acts as the Nucleophile. Catalysis depends on residues aspartate 203 and histidine 231. Residue histidine 231 participates in substrate binding.

This sequence belongs to the AB hydrolase superfamily. Carboxylesterase BioH family. In terms of assembly, monomer.

Its subcellular location is the cytoplasm. The enzyme catalyses 6-carboxyhexanoyl-[ACP] methyl ester + H2O = 6-carboxyhexanoyl-[ACP] + methanol + H(+). The protein operates within cofactor biosynthesis; biotin biosynthesis. The physiological role of BioH is to remove the methyl group introduced by BioC when the pimeloyl moiety is complete. It allows to synthesize pimeloyl-ACP via the fatty acid synthetic pathway through the hydrolysis of the ester bonds of pimeloyl-ACP esters. The protein is Pimeloyl-[acyl-carrier protein] methyl ester esterase of Xanthomonas axonopodis pv. citri (strain 306).